Consider the following 512-residue polypeptide: Mesoderm induction early response protein 1 (512 aa).

Over residues 1 to 16 (MAEPSVESSSPGGSAT) the composition is skewed to low complexity. Disordered regions lie at residues 1-63 (MAEP…REGD) and 75-173 (YGST…EDYI). Residue Ser10 is modified to Phosphoserine. Positions 17–36 (SDDHEFDPSADMLVHDFDDE) are enriched in basic and acidic residues. Acidic residues-rich tracts occupy residues 37 to 46 (RTLEEEEMME) and 83 to 105 (EEDE…DNDD). Residues 129–144 (QSSNDDPSQSVASQDA) are compositionally biased toward polar residues. Ser141 carries the post-translational modification Phosphoserine. Position 155 is a phosphotyrosine (Tyr155). Residues Ser160 and Ser166 each carry the phosphoserine modification. The span at 160-173 (SEVEEESEEDEDYI) shows a compositional bias: acidic residues. The 99-residue stretch at 180–278 (KEIMVGSMFQ…EALRRLRFNV (99 aa)) folds into the ELM2 domain. The segment at 180-284 (KEIMVGSMFQ…RFNVKAAREE (105 aa)) is interaction with HDAC1. A Glycyl lysine isopeptide (Lys-Gly) (interchain with G-Cter in SUMO2) cross-link involves residue Lys239. One can recognise an SANT domain in the interval 283 to 335 (EELSVWTEEECRNFEQGLKAYGKDFHLIQANKVRTRSVGECVAFYYMWKKSER). Residues 366 to 512 (ESESAASSRA…KFEELENTDD (147 aa)) form a disordered region. Residues Ser367, Ser369, and Ser377 each carry the phosphoserine modification. Residues 396–409 (TVSTANQNGVSSNG) show a composition bias toward polar residues. Residues 414–423 (LNKEEVKVEG) show a composition bias toward basic and acidic residues. Lys420 participates in a covalent cross-link: Glycyl lysine isopeptide (Lys-Gly) (interchain with G-Cter in SUMO2). The residue at position 448 (Thr448) is a Phosphothreonine. The span at 462–475 (ARNENDFDEKSERP) shows a compositional bias: basic and acidic residues. Polar residues predominate over residues 482 to 494 (NSNGKESPGSSEF). Residues Ser483, Ser488, and Ser491 each carry the phosphoserine modification.

In terms of assembly, interacts with HDAC1. Part of a complex containing at least CDYL, MIER1, MIER2, HDAC1 and HDAC2. Ubiquitously expressed, but at very low levels. However, consistent level of expression are observed in heart, testis, thyroid, ovary and adrenal gland. Transcripts are up-regulated in breast carcinoma cell lines and tumor.

It is found in the nucleus. The protein localises to the cytoplasm. In terms of biological role, transcriptional repressor regulating the expression of a number of genes including SP1 target genes. Probably functions through recruitment of HDAC1 a histone deacetylase involved in chromatin silencing. The polypeptide is Mesoderm induction early response protein 1 (MIER1) (Homo sapiens (Human)).